We begin with the raw amino-acid sequence, 83 residues long: Large ribosomal subunit protein bL27 (83 aa).

Residues 1–21 are disordered; sequence MAHKRSSGAGRNGRDSNPKYL.

This sequence belongs to the bacterial ribosomal protein bL27 family.

This Kosmotoga olearia (strain ATCC BAA-1733 / DSM 21960 / TBF 19.5.1) protein is Large ribosomal subunit protein bL27.